Here is an 85-residue protein sequence, read N- to C-terminus: Large ribosomal subunit protein bL31B (85 aa).

Belongs to the bacterial ribosomal protein bL31 family. Type B subfamily. As to quaternary structure, part of the 50S ribosomal subunit.

The chain is Large ribosomal subunit protein bL31B from Staphylococcus haemolyticus (strain JCSC1435).